A 417-amino-acid chain; its full sequence is Phosphoglycerate kinase, cytosolic (417 aa).

12 residues coordinate (2R)-3-phosphoglycerate: Val-23, Asp-24, Phe-25, Asn-26, Arg-39, Ser-61, His-62, Gly-64, Arg-65, Arg-132, His-168, and Arg-169. Residues Gly-214 and Ala-215 each coordinate ADP. Gly-214 is a binding site for CDP. The AMP site is built by Ala-215 and Lys-216. Ala-215 serves as a coordination point for ATP. Residue Ala-215 participates in Mg(2+) binding. Residue Lys-216 coordinates (2R)-3-phosphoglycerate. Residue Asp-219 participates in CDP binding. Mg(2+) is bound at residue Asp-219. ADP contacts are provided by Lys-220 and Gly-238. Lys-220 contributes to the AMP binding site. Lys-220 provides a ligand contact to ATP. Gly-238 is a binding site for CDP. AMP is bound by residues Ala-239 and Ala-311. Residues Ala-239 and Ala-311 each coordinate ATP. The ADP site is built by Ala-311 and Asn-335. CDP-binding residues include Gly-336 and Phe-341. Phe-341, Glu-342, Asp-374, and Ser-375 together coordinate ADP. Glu-342 contributes to the AMP binding site. Residues Glu-342, Asp-374, and Ser-375 each contribute to the ATP site. Residue Asp-374 coordinates Mg(2+).

The protein belongs to the phosphoglycerate kinase family. Monomer. Mg(2+) serves as cofactor.

It is found in the cytoplasm. The enzyme catalyses (2R)-3-phosphoglycerate + ATP = (2R)-3-phospho-glyceroyl phosphate + ADP. Its pathway is carbohydrate degradation; glycolysis; pyruvate from D-glyceraldehyde 3-phosphate: step 2/5. This Leishmania major protein is Phosphoglycerate kinase, cytosolic (PGKB).